The following is a 376-amino-acid chain: Ribosomal RNA large subunit methyltransferase G (376 aa).

Belongs to the methyltransferase superfamily. RlmG family.

The protein resides in the cytoplasm. The catalysed reaction is guanosine(1835) in 23S rRNA + S-adenosyl-L-methionine = N(2)-methylguanosine(1835) in 23S rRNA + S-adenosyl-L-homocysteine + H(+). Functionally, specifically methylates the guanine in position 1835 (m2G1835) of 23S rRNA. The chain is Ribosomal RNA large subunit methyltransferase G from Cronobacter sakazakii (strain ATCC BAA-894) (Enterobacter sakazakii).